Reading from the N-terminus, the 586-residue chain is Acyl-coenzyme A synthetase ACSM3, mitochondrial (586 aa).

Residues 1–27 (MLARVTRKMLRHAKCFQRLAIFGSVRA) constitute a mitochondrion transit peptide. N6-succinyllysine occurs at positions 73 and 106. An N6-acetyllysine modification is found at lysine 157. ATP contacts are provided by residues 235 to 243 (TSGTSGYPK), 374 to 379 (EGYGQT), aspartate 461, arginine 476, and lysine 572.

It belongs to the ATP-dependent AMP-binding enzyme family. It depends on Mg(2+) as a cofactor. The cofactor is Mn(2+).

It localises to the mitochondrion. The protein localises to the mitochondrion matrix. It carries out the reaction a medium-chain fatty acid + ATP + CoA = a medium-chain fatty acyl-CoA + AMP + diphosphate. The catalysed reaction is propanoate + ATP + CoA = propanoyl-CoA + AMP + diphosphate. The enzyme catalyses butanoate + ATP + CoA = butanoyl-CoA + AMP + diphosphate. It catalyses the reaction 2-methylpropanoate + ATP + CoA = 2-methylpropanoyl-CoA + AMP + diphosphate. It carries out the reaction 2-methylbutanoate + ATP + CoA = 2-methylbutanoyl-CoA + AMP + diphosphate. The catalysed reaction is octanoate + ATP + CoA = octanoyl-CoA + AMP + diphosphate. Catalyzes the activation of fatty acids by CoA to produce an acyl-CoA, the first step in fatty acid metabolism. Capable of activating medium-chain fatty acids with a preference for isobutyrate among fatty acids with 2-6 carbon atoms. This Homo sapiens (Human) protein is Acyl-coenzyme A synthetase ACSM3, mitochondrial (ACSM3).